We begin with the raw amino-acid sequence, 309 residues long: ATP synthase gamma chain (309 aa).

This sequence belongs to the ATPase gamma chain family. F-type ATPases have 2 components, CF(1) - the catalytic core - and CF(0) - the membrane proton channel. CF(1) has five subunits: alpha(3), beta(3), gamma(1), delta(1), epsilon(1). CF(0) has three main subunits: a, b and c.

It is found in the cell membrane. Its function is as follows. Produces ATP from ADP in the presence of a proton gradient across the membrane. The gamma chain is believed to be important in regulating ATPase activity and the flow of protons through the CF(0) complex. This Salinispora arenicola (strain CNS-205) protein is ATP synthase gamma chain.